The chain runs to 273 residues: 5-deoxy-glucuronate isomerase (273 aa).

Belongs to the isomerase IolB family.

The catalysed reaction is 5-deoxy-D-glucuronate = 5-dehydro-2-deoxy-D-gluconate. Its pathway is polyol metabolism; myo-inositol degradation into acetyl-CoA; acetyl-CoA from myo-inositol: step 4/7. Involved in the isomerization of 5-deoxy-glucuronate (5DG) to 5-dehydro-2-deoxy-D-gluconate (DKG or 2-deoxy-5-keto-D-gluconate). The polypeptide is 5-deoxy-glucuronate isomerase (Listeria monocytogenes serovar 1/2a (strain ATCC BAA-679 / EGD-e)).